We begin with the raw amino-acid sequence, 189 residues long: UPF0398 protein LCK_00599 (189 aa).

It belongs to the UPF0398 family.

The chain is UPF0398 protein LCK_00599 from Leuconostoc citreum (strain KM20).